Reading from the N-terminus, the 202-residue chain is Na(+)-translocating NADH-quinone reductase subunit E (202 aa).

Helical transmembrane passes span 11–31 (SIFM…FLAV), 41–61 (LGVA…IIYF), 81–101 (FLGF…LEMV), 114–134 (GIYL…LFMV), 144–164 (LVYG…LAGI), and 180–200 (LGIT…FSGI).

Belongs to the NqrDE/RnfAE family. In terms of assembly, composed of six subunits; NqrA, NqrB, NqrC, NqrD, NqrE and NqrF.

It localises to the cell inner membrane. It catalyses the reaction a ubiquinone + n Na(+)(in) + NADH + H(+) = a ubiquinol + n Na(+)(out) + NAD(+). In terms of biological role, NQR complex catalyzes the reduction of ubiquinone-1 to ubiquinol by two successive reactions, coupled with the transport of Na(+) ions from the cytoplasm to the periplasm. NqrA to NqrE are probably involved in the second step, the conversion of ubisemiquinone to ubiquinol. This chain is Na(+)-translocating NADH-quinone reductase subunit E, found in Psychromonas ingrahamii (strain DSM 17664 / CCUG 51855 / 37).